A 396-amino-acid chain; its full sequence is Probable sugar efflux transporter (396 aa).

12 helical membrane-spanning segments follow: residues Val15–Met35, Gly51–Ala71, Leu84–Leu104, Met109–Ile129, Gln137–Gly157, Val168–Leu188, Pro209–Tyr229, Asn245–Phe265, Pro273–Phe293, Thr297–Leu317, Val333–Gly353, and Ile365–Leu385.

It belongs to the major facilitator superfamily. SotB (TC 2.A.1.2) family.

It is found in the cell inner membrane. Functionally, involved in the efflux of sugars. The physiological role may be the reduction of the intracellular concentration of toxic sugars or sugar metabolites. The sequence is that of Probable sugar efflux transporter from Haemophilus influenzae (strain ATCC 51907 / DSM 11121 / KW20 / Rd).